The following is a 381-amino-acid chain: Choline transport ATP-binding protein OpuBA (381 aa).

Positions Leu-2–Ile-236 constitute an ABC transporter domain. Gly-35 to Thr-42 is a binding site for ATP. CBS domains follow at residues Met-256–Glu-314 and Leu-316–Glu-374.

This sequence belongs to the ABC transporter superfamily.

Involved in a high affinity multicomponent binding-protein-dependent transport system for choline. Probably responsible for energy coupling to the transport system. In Bacillus subtilis (strain 168), this protein is Choline transport ATP-binding protein OpuBA (opuBA).